The chain runs to 193 residues: ATP-dependent Clp protease proteolytic subunit (193 aa).

Residue Ser-97 is the Nucleophile of the active site. His-122 is a catalytic residue.

The protein belongs to the peptidase S14 family. In terms of assembly, fourteen ClpP subunits assemble into 2 heptameric rings which stack back to back to give a disk-like structure with a central cavity, resembling the structure of eukaryotic proteasomes.

It localises to the cytoplasm. The enzyme catalyses Hydrolysis of proteins to small peptides in the presence of ATP and magnesium. alpha-casein is the usual test substrate. In the absence of ATP, only oligopeptides shorter than five residues are hydrolyzed (such as succinyl-Leu-Tyr-|-NHMec, and Leu-Tyr-Leu-|-Tyr-Trp, in which cleavage of the -Tyr-|-Leu- and -Tyr-|-Trp bonds also occurs).. Cleaves peptides in various proteins in a process that requires ATP hydrolysis. Has a chymotrypsin-like activity. Plays a major role in the degradation of misfolded proteins. The sequence is that of ATP-dependent Clp protease proteolytic subunit from Fusobacterium nucleatum subsp. nucleatum (strain ATCC 25586 / DSM 15643 / BCRC 10681 / CIP 101130 / JCM 8532 / KCTC 2640 / LMG 13131 / VPI 4355).